The primary structure comprises 485 residues: Glutamyl-tRNA(Gln) amidotransferase subunit A (485 aa).

Catalysis depends on charge relay system residues lysine 76 and serine 151. The active-site Acyl-ester intermediate is the serine 175.

This sequence belongs to the amidase family. GatA subfamily. As to quaternary structure, heterotrimer of A, B and C subunits.

The enzyme catalyses L-glutamyl-tRNA(Gln) + L-glutamine + ATP + H2O = L-glutaminyl-tRNA(Gln) + L-glutamate + ADP + phosphate + H(+). Its function is as follows. Allows the formation of correctly charged Gln-tRNA(Gln) through the transamidation of misacylated Glu-tRNA(Gln) in organisms which lack glutaminyl-tRNA synthetase. The reaction takes place in the presence of glutamine and ATP through an activated gamma-phospho-Glu-tRNA(Gln). The sequence is that of Glutamyl-tRNA(Gln) amidotransferase subunit A from Chlorobium luteolum (strain DSM 273 / BCRC 81028 / 2530) (Pelodictyon luteolum).